The following is a 331-amino-acid chain: DNA-directed RNA polymerase subunit alpha (331 aa).

The segment at 1-237 is alpha N-terminal domain (alpha-NTD); that stretch reads MQSFEKEFLK…DQLSSFIDLK (237 aa). Positions 251-331 are alpha C-terminal domain (alpha-CTD); that stretch reads FDPSLLNLVD…NWPPKHLSEQ (81 aa).

The protein belongs to the RNA polymerase alpha chain family. Homodimer. The RNAP catalytic core consists of 2 alpha, 1 beta, 1 beta' and 1 omega subunit. When a sigma factor is associated with the core the holoenzyme is formed, which can initiate transcription.

It catalyses the reaction RNA(n) + a ribonucleoside 5'-triphosphate = RNA(n+1) + diphosphate. Functionally, DNA-dependent RNA polymerase catalyzes the transcription of DNA into RNA using the four ribonucleoside triphosphates as substrates. The chain is DNA-directed RNA polymerase subunit alpha from Blochmanniella floridana.